Here is a 199-residue protein sequence, read N- to C-terminus: dITP/XTP pyrophosphatase (199 aa).

7–12 (TGNKGK) contacts substrate. The Proton acceptor role is filled by Asp-71. Residue Asp-71 coordinates Mg(2+). Substrate-binding positions include Ala-72, 154–157 (FGYD), Lys-177, and 182–183 (HR).

The protein belongs to the HAM1 NTPase family. Homodimer. Mg(2+) serves as cofactor.

The catalysed reaction is XTP + H2O = XMP + diphosphate + H(+). It carries out the reaction dITP + H2O = dIMP + diphosphate + H(+). It catalyses the reaction ITP + H2O = IMP + diphosphate + H(+). Functionally, pyrophosphatase that catalyzes the hydrolysis of nucleoside triphosphates to their monophosphate derivatives, with a high preference for the non-canonical purine nucleotides XTP (xanthosine triphosphate), dITP (deoxyinosine triphosphate) and ITP. Seems to function as a house-cleaning enzyme that removes non-canonical purine nucleotides from the nucleotide pool, thus preventing their incorporation into DNA/RNA and avoiding chromosomal lesions. The chain is dITP/XTP pyrophosphatase from Bdellovibrio bacteriovorus (strain ATCC 15356 / DSM 50701 / NCIMB 9529 / HD100).